The following is a 396-amino-acid chain: 8-amino-7-oxononanoate synthase (396 aa).

R21 contacts substrate. 112-113 (GY) is a pyridoxal 5'-phosphate binding site. H137 serves as a coordination point for substrate. Pyridoxal 5'-phosphate is bound by residues S183, H211, and T239. Position 242 is an N6-(pyridoxal phosphate)lysine (K242). T358 contacts substrate.

Belongs to the class-II pyridoxal-phosphate-dependent aminotransferase family. BioF subfamily. In terms of assembly, homodimer. It depends on pyridoxal 5'-phosphate as a cofactor.

It catalyses the reaction 6-carboxyhexanoyl-[ACP] + L-alanine + H(+) = (8S)-8-amino-7-oxononanoate + holo-[ACP] + CO2. It functions in the pathway cofactor biosynthesis; biotin biosynthesis. In terms of biological role, catalyzes the decarboxylative condensation of pimeloyl-[acyl-carrier protein] and L-alanine to produce 8-amino-7-oxononanoate (AON), [acyl-carrier protein], and carbon dioxide. This is 8-amino-7-oxononanoate synthase from Bordetella petrii (strain ATCC BAA-461 / DSM 12804 / CCUG 43448).